The chain runs to 141 residues: MSVGKAKGAQKTVQKGIHNKVARKVRTSTTFRRPKTLELARKPKYARKSVPHASRLDEYKIIVNPINSESAMKKIEDDNTLVFHVHLKANKFTIKNAVKKLYSVDAVKINTLIRPNGTKKAFVKLSADADALDVANRIGFL.

Residues 1–22 (MSVGKAKGAQKTVQKGIHNKVA) form a disordered region.

This sequence belongs to the universal ribosomal protein uL23 family. As to quaternary structure, component of the large ribosomal subunit (LSU). Mature yeast ribosomes consist of a small (40S) and a large (60S) subunit. The 40S small subunit contains 1 molecule of ribosomal RNA (18S rRNA) and at least 33 different proteins. The large 60S subunit contains 3 rRNA molecules (25S, 5.8S and 5S rRNA) and at least 46 different proteins. uL23 is associated with the polypeptide exit tunnel.

It is found in the cytoplasm. Functionally, this protein binds to a specific region on the 26S rRNA. Component of the ribosome, a large ribonucleoprotein complex responsible for the synthesis of proteins in the cell. The small ribosomal subunit (SSU) binds messenger RNAs (mRNAs) and translates the encoded message by selecting cognate aminoacyl-transfer RNA (tRNA) molecules. The large subunit (LSU) contains the ribosomal catalytic site termed the peptidyl transferase center (PTC), which catalyzes the formation of peptide bonds, thereby polymerizing the amino acids delivered by tRNAs into a polypeptide chain. The nascent polypeptides leave the ribosome through a tunnel in the LSU and interact with protein factors that function in enzymatic processing, targeting, and the membrane insertion of nascent chains at the exit of the ribosomal tunnel. uL23 is a major component of the universal docking site for these factors at the polypeptide exit tunnel. This Schizosaccharomyces pombe (strain 972 / ATCC 24843) (Fission yeast) protein is Large ribosomal subunit protein uL23B (rpl2502).